Consider the following 238-residue polypeptide: Polynucleotide 3'-phosphatase (238 aa).

The protein belongs to the DNA 3' phosphatase family.

It is found in the nucleus. It catalyses the reaction a 3'end (2'-deoxyribonucleotide 3'-phosphate)-DNA + H2O = a 3'-end 2'-deoxyribonucleotide-DNA + phosphate. Dephosphorylate DNA's 3'-phosphate termini. Has a role in the repair of breaks in single-stranded DNA. The protein is Polynucleotide 3'-phosphatase (TPP1) of Saccharomyces cerevisiae (strain ATCC 204508 / S288c) (Baker's yeast).